The sequence spans 77 residues: U8-lycotoxin-Ls1q (77 aa).

An N-terminal signal peptide occupies residues 1–20 (MKLMIFAGLVLFAIVSLIEA). The propeptide occupies 21-26 (QAEHEK).

The protein belongs to the neurotoxin 19 (CSTX) family. 08 (U8-Lctx) subfamily. In terms of processing, contains 4 disulfide bonds. As to expression, expressed by the venom gland.

Its subcellular location is the secreted. The polypeptide is U8-lycotoxin-Ls1q (Lycosa singoriensis (Wolf spider)).